Reading from the N-terminus, the 870-residue chain is Dynamin-2 (870 aa).

Residues 28–294 form the Dynamin-type G domain; it reads HLDLPQIAVV…LTNHIRESLP (267 aa). The interval 38 to 45 is G1 motif; the sequence is GGQSAGKS. Positions 41, 43, 44, 45, 46, 59, and 60 each coordinate GDP. The G2 motif stretch occupies residues 64–66; the sequence is VTR. The tract at residues 136 to 139 is G3 motif; the sequence is DLPG. Residues 205–208 are G4 motif; it reads TKLD. Positions 206, 208, and 211 each coordinate GDP. Tyrosine 231 is subject to Phosphotyrosine; by SRC. Positions 235-238 are G5 motif; that stretch reads VNRS. GDP is bound by residues asparagine 236, arginine 237, and glutamine 239. N6-acetyllysine is present on lysine 299. The PH domain maps to 519–625; sequence LVIRRGWLTI…WKASFLRAGV (107 aa). Position 597 is a phosphotyrosine; by SRC (tyrosine 597). Lysine 598 is modified (N6-acetyllysine). In terms of domain architecture, GED spans 653–744; sequence VETIRNLVDS…IIGDISTSTV (92 aa). The tract at residues 741 to 870 is disordered; it reads TSTVSTPVPP…IRPAEPSLLD (130 aa). A Phosphothreonine modification is found at threonine 755. Residues 756 to 767 show a composition bias toward polar residues; the sequence is WLQSASSHSPTP. A Phosphoserine; by CDK1 modification is found at serine 764. Residues 796-806 show a composition bias toward low complexity; sequence VPVGAAASFSA. The segment covering 826 to 855 has biased composition (pro residues); sequence PAPPQIPSRPVRIPPGIPPGVPSRRPPAAP. Serine 848 carries the phosphoserine; by GSK3-alpha modification.

It belongs to the TRAFAC class dynamin-like GTPase superfamily. Dynamin/Fzo/YdjA family. In terms of assembly, oligomerizes into a helical polymer that self-assembles around the vesicle membrane, when associated to the menbrane through lipid binding. Interacts with SHANK1 and SHANK2. Interacts with SNX9. Interacts (via C-terminal proline-rich domain (PRD)) with SNX18 (via SH3 domain); this interaction regulates ATG9A and ATG16L1 trafficking from recycling endosomes to sites of autophagosome formation. Interacts with SNX33 (via SH3 domain). Interacts with MYO1E (via SH3 domain). Interacts with PSTPIP1 (via SH3 domain). Interacts with CTNND2. Interacts (via C-terminal proline-rich domain (PRD)) with BIN1 (via SH3 domain); this interaction allows the recruitment of DNM2 to the membrane tubules and inhibits self-assembly-stimulated GTPase activity on the membrane. Interacts with GABARAP, GABARAPL1 and GABARAPL2. Interacts with MAP1LC3B (the lipidate and non-lipidated LC3 form); this interaction mediates recycling endosome scission leading to autophagosome release. Interacts with ITSN1. Interacts (via C-terminal proline-rich domain (PRD)) with SH3BP4 (via SH3 domain); this interaction controls the GTPase activity and is prevented by EGFR-induced tyrosine phosphorylation of either DNM2 or SH3BP4. May interact with PIK3C3. May be a component of a complex composed of RAB5A (in GDP-bound form), DYN2 and PIK3C3. Interacts with SDC4; this interaction is markedly enhanced at focal ahesion site upon induction of focal adhesions and stress-fiber formation. Interacts with ACTN1. Interacts with CTTN; this interaction stimulates the intrinsic GTPase activity of DNM2 and stabilizes the association of DNM2 and actin filaments; in addition this interaction is stimulated by ligand binding to the receptor, leading to the recruitment of the DNM2-CTTN complex to the sequestered receptor-ligand complex to its internalization. Interacts with NOSTRIN (via SH3 domain); this interaction allows the recruitment of NOS3 to dynamin-positive structures. Interacts with TUBG1; this interaction may participate in centrosome cohesion. In terms of processing, phosphorylation at Ser-848 by GSK3-alpha relieves the inhibition of BIN1 and promotes endocytosis. Phosphorylation at Ser-764 by CDK1 is greatly increased upon mitotic entry. It regulates cytokinesis downstream of calcineurin, and does not affect clathrin-mediated endocytosis. Dephosphorylated by calcineurin/PP2 during cytokinesis in a Ca(2+)- and calmodulin-dependent manner. Phosphorylated on tyrosine residues by EGFR and after activation of SRC. In terms of tissue distribution, widely expressed. Expressed in skeletal muscle and the peripheral nerve.

Its subcellular location is the cytoplasm. It localises to the cytoskeleton. The protein resides in the cytoplasmic vesicle. The protein localises to the clathrin-coated vesicle. It is found in the cell projection. Its subcellular location is the uropodium. It localises to the endosome. The protein resides in the microtubule organizing center. The protein localises to the centrosome. It is found in the centriole. Its subcellular location is the recycling endosome. It localises to the phagocytic cup. The protein resides in the phagosome membrane. The protein localises to the podosome. It is found in the cell junction. Its subcellular location is the postsynaptic density. It localises to the synapse. The protein resides in the synaptosome. The protein localises to the midbody. It is found in the membrane. Its subcellular location is the clathrin-coated pit. The enzyme catalyses GTP + H2O = GDP + phosphate + H(+). In terms of biological role, catalyzes the hydrolysis of GTP and utilizes this energy to mediate vesicle scission at plasma membrane during endocytosis and filament remodeling at many actin structures during organization of the actin cytoskeleton. Plays an important role in vesicular trafficking processes, namely clathrin-mediated endocytosis (CME), exocytic and clathrin-coated vesicle from the trans-Golgi network, and PDGF stimulated macropinocytosis. During vesicular trafficking process, associates to the membrane, through lipid binding, and self-assembles into ring-like structure through oligomerization to form a helical polymer around the vesicle membrane and leading to vesicle scission. Plays a role in organization of the actin cytoskeleton by mediating arrangement of stress fibers and actin bundles in podocytes. During organization of the actin cytoskeleton, self-assembles into ring-like structure that directly bundles actin filaments to form typical membrane tubules decorated with dynamin spiral polymers. Self-assembly increases GTPase activity and the GTP hydrolysis causes the rapid depolymerization of dynamin spiral polymers, and results in dispersion of actin bundles. Remodels, through its interaction with CTTN, bundled actin filaments in a GTPase-dependent manner and plays a role in orchestrating the global actomyosin cytoskeleton. The interaction with CTTN stabilizes the interaction of DNM2 and actin filaments and stimulates the intrinsic GTPase activity that results in actin filament-barbed ends and increases the sensitivity of filaments in bundles to the actin depolymerizing factor, CFL1. Plays a role in the autophagy process, by participating in the formation of ATG9A vesicles destined for the autophagosomes through its interaction with SNX18, by mediating recycling endosome scission leading to autophagosome release through MAP1LC3B interaction. Also regulates maturation of apoptotic cell corpse-containing phagosomes by recruiting PIK3C3 to the phagosome membrane. Also plays a role in cytokinesis. May participate in centrosome cohesion through its interaction with TUBG1. Plays a role in the regulation of neuron morphology, axon growth and formation of neuronal growth cones. Involved in membrane tubulation. This is Dynamin-2 from Homo sapiens (Human).